The chain runs to 520 residues: FAD-linked oxidoreductase OXR2 (520 aa).

The first 23 residues, 1-23 (MKSFSLLASAGLATLASLPLTMA), serve as a signal peptide directing secretion. 4 N-linked (GlcNAc...) asparagine glycosylation sites follow: Asn77, Asn220, Asn378, and Asn390. Residues 79–251 (SRPTIRLVVV…TSFQSKIYPR (173 aa)) form the FAD-binding PCMH-type domain.

This sequence belongs to the oxygen-dependent FAD-linked oxidoreductase family. The cofactor is FAD.

It functions in the pathway polyketide biosynthesis. Functionally, FAD-linked oxidoreductase; part of the gene cluster that mediates the biosynthesis of pyriculol and pyriculariol, two heptaketides that induce lesion formation upon application on rice leaves but are dispensable for pathogenicity. The highly reducing polyketide synthase synthesizes the heptaketide backbone of pyriculol and pyriculariol. Pyriculol and pyriculariol contain several hydroxyl moieties and double bonds, so it can be assumed that several reduction steps occur during biosynthesis. These reactions could be executed by PKS19 itself or partly by the tailoring enzymes OXR1, OXR2, RED1, RED2 or RED3, identified within the cluster. The FAD-linked oxidoreductase OXR1 is the only tailoring enzyme for which the function has been determined yet, and is involved in the oxidation of dihydropyriculol and dihydropyriculariol into pyriculol and pyriculariol, respectively. This chain is FAD-linked oxidoreductase OXR2, found in Pyricularia oryzae (strain 70-15 / ATCC MYA-4617 / FGSC 8958) (Rice blast fungus).